The sequence spans 66 residues: Large ribosomal subunit protein bL35 (66 aa).

Belongs to the bacterial ribosomal protein bL35 family.

The protein is Large ribosomal subunit protein bL35 of Beijerinckia indica subsp. indica (strain ATCC 9039 / DSM 1715 / NCIMB 8712).